The chain runs to 383 residues: Acetylornithine deacetylase (383 aa).

H80 lines the Zn(2+) pocket. D82 is an active-site residue. Position 112 (D112) interacts with Zn(2+). The active site involves E144. Positions 145, 169, and 355 each coordinate Zn(2+).

The protein belongs to the peptidase M20A family. ArgE subfamily. As to quaternary structure, homodimer. Zn(2+) serves as cofactor. It depends on Co(2+) as a cofactor. The cofactor is glutathione.

The protein resides in the cytoplasm. The enzyme catalyses N(2)-acetyl-L-ornithine + H2O = L-ornithine + acetate. The protein operates within amino-acid biosynthesis; L-arginine biosynthesis; L-ornithine from N(2)-acetyl-L-ornithine (linear): step 1/1. In terms of biological role, catalyzes the hydrolysis of the amide bond of N(2)-acetylated L-amino acids. Cleaves the acetyl group from N-acetyl-L-ornithine to form L-ornithine, an intermediate in L-arginine biosynthesis pathway, and a branchpoint in the synthesis of polyamines. This Escherichia coli O45:K1 (strain S88 / ExPEC) protein is Acetylornithine deacetylase.